A 376-amino-acid chain; its full sequence is Succinyl-diaminopimelate desuccinylase (376 aa).

His66 serves as a coordination point for Zn(2+). The active site involves Asp68. Position 99 (Asp99) interacts with Zn(2+). Glu133 acts as the Proton acceptor in catalysis. 3 residues coordinate Zn(2+): Glu134, Glu162, and His349.

The protein belongs to the peptidase M20A family. DapE subfamily. As to quaternary structure, homodimer. The cofactor is Zn(2+). Co(2+) serves as cofactor.

It carries out the reaction N-succinyl-(2S,6S)-2,6-diaminopimelate + H2O = (2S,6S)-2,6-diaminopimelate + succinate. It functions in the pathway amino-acid biosynthesis; L-lysine biosynthesis via DAP pathway; LL-2,6-diaminopimelate from (S)-tetrahydrodipicolinate (succinylase route): step 3/3. Catalyzes the hydrolysis of N-succinyl-L,L-diaminopimelic acid (SDAP), forming succinate and LL-2,6-diaminopimelate (DAP), an intermediate involved in the bacterial biosynthesis of lysine and meso-diaminopimelic acid, an essential component of bacterial cell walls. The polypeptide is Succinyl-diaminopimelate desuccinylase (Ruthia magnifica subsp. Calyptogena magnifica).